The chain runs to 806 residues: N-terminal kinase-like protein (806 aa).

Residues 14 to 314 form the Protein kinase domain; that stretch reads FELSPEPPEG…PEDFCRHKVL (301 aa). HEAT repeat units follow at residues 350–388, 389–427, and 507–545; these read IIPVVVKMFSSTDRAMRIRLLQQMEQFIQYLDEPTVNTQ, IFPHVTHGFLDTNPAIREQTVKSMLLLAPKLNEANLNVE, and ILPVLCGLTVDPEKSVRDQAFKTIRSFLSKLESVSEDPT. Disordered stretches follow at residues 586-642 and 663-806; these read RAHP…TADR and DDWS…RKLD. Positions 601–611 are enriched in pro residues; sequence RPVPEGNPAPA. Ser-752 is modified (phosphoserine). Over residues 752–762 the composition is skewed to acidic residues; it reads SWGEDNWEGLE. Positions 755-795 form a coiled coil; it reads EDNWEGLEAESRQVKAELARKKREERRREMEAKRAEKKTTK. Basic and acidic residues-rich tracts occupy residues 763–773 and 780–793; these read AESRQVKAELA and RRREMEAKRAEKKT. The interaction with COPB1 stretch occupies residues 791-806; sequence KKTTKGPMKLGARKLD.

Belongs to the protein kinase superfamily. As to quaternary structure, homooligomer. Interacts with GORAB. Interacts with COPA, COPB1 and COPB2. Interacts with AP2B1. In terms of tissue distribution, expressed in diaphragm, quadriceps, thymus, liver, lung, spleen, kidney, heart and brain. Prominently expressed in neurons, and enriched at central nervous system synapses and neuromuscular junctions.

The protein localises to the cytoplasm. It is found in the cytoskeleton. It localises to the microtubule organizing center. The protein resides in the centrosome. Its subcellular location is the endoplasmic reticulum-Golgi intermediate compartment. The protein localises to the golgi apparatus. It is found in the cis-Golgi network. Its function is as follows. Regulates COPI-mediated retrograde protein traffic at the interface between the Golgi apparatus and the endoplasmic reticulum. Involved in the maintenance of the Golgi apparatus morphology. The polypeptide is N-terminal kinase-like protein (Scyl1) (Mus musculus (Mouse)).